The primary structure comprises 489 residues: Homoserine O-acetyltransferase (489 aa).

Positions 63 to 435 constitute an AB hydrolase-1 domain; the sequence is NALVICHALS…SPEGHDAFLL (373 aa). Ser-162 is a catalytic residue. Catalysis depends on Ser-162, which acts as the Nucleophile. The segment at 247–272 is disordered; it reads RFGRNVPDPSKRQNINGTERLPTPPN. Catalysis depends on residues Asp-401 and His-430.

Belongs to the AB hydrolase superfamily. MetX family.

It catalyses the reaction L-homoserine + acetyl-CoA = O-acetyl-L-homoserine + CoA. It functions in the pathway amino-acid biosynthesis; L-methionine biosynthesis via de novo pathway; O-acetyl-L-homoserine from L-homoserine: step 1/1. Functionally, commits homoserine to the methionine biosynthesis pathway by catalyzing its O-acetylation. This chain is Homoserine O-acetyltransferase (metE), found in Emericella nidulans (strain FGSC A4 / ATCC 38163 / CBS 112.46 / NRRL 194 / M139) (Aspergillus nidulans).